The primary structure comprises 1096 residues: Cohesin subunit scc-3 (1096 aa).

The segment covering 1–21 has biased composition (polar residues); it reads MSETPTDQSPQRMSTRNQARV. 2 disordered regions span residues 1–53 and 67–106; these read MSET…KKRA and NLNN…ESAE. The stretch at 261–312 forms a coiled coil; the sequence is IELTQSKEKTSKQIEAEKAKLKNNSAGNEKYEALVAQRTQTEERAEEIRQII. One can recognise an SCD domain in the interval 320-405; the sequence is FVHRYRDVVP…NKFKDRLVSM (86 aa). A disordered region spans residues 1057-1096; it reads DNMSVRSGMTVTSNATMRSTASSTRGRGRGRGRSRIADDF. Positions 1060–1073 are enriched in polar residues; it reads SVRSGMTVTSNATM.

Belongs to the SCC3 family. In terms of assembly, component of the cohesin complex, composed of the smc-1 and smc-3 heterodimer attached via their hinge domain, scc-1 which links them, and scc-3. Interacts with scc-1, smc-1 and tim-1. As to expression, expressed in gonadal cells.

The protein localises to the nucleus. Its subcellular location is the chromosome. Functionally, component of the cohesin complex, a complex required for the cohesion of sister chromatids after DNA replication. The cohesin complex apparently forms a large proteinaceous ring within which sister chromatids can be trapped. At anaphase, the scc-1 subunit of the complex is cleaved and dissociates from chromatin, allowing sister chromatids to segregate. The cohesin complex may also play a role in spindle pole assembly during mitosis. Plays an essential role in cell division during embryonic development. Required for the assembly of the synaptonemal complex between homologous chromosomes to promote sister chromatid cohesion during mitosis and meiosis. Has a role in stabilization of homologous chromosome associations during meiotic synapsis. Required for chromosome segregation during mitosis and meiosis. Plays a role in DNA double-strand break (DSB) repair during meiotic recombination and promotes the assembly of the 9-1-1 cell-cycle checkpoint response complex which is required for inducing apoptosis in response to DNA damage, at DNA damage sites. In Caenorhabditis elegans, this protein is Cohesin subunit scc-3.